Here is a 151-residue protein sequence, read N- to C-terminus: UPF0756 membrane protein HSM_1471 (151 aa).

Transmembrane regions (helical) follow at residues Met1 to Leu21, Tyr52 to Gly72, Ala81 to Gly101, and Ile123 to Leu143.

It belongs to the UPF0756 family.

Its subcellular location is the cell membrane. The protein is UPF0756 membrane protein HSM_1471 of Histophilus somni (strain 2336) (Haemophilus somnus).